Reading from the N-terminus, the 343-residue chain is Uroporphyrinogen decarboxylase (343 aa).

Residues 23–27 (RQAGR), Asp73, Tyr150, Ser205, and His322 each bind substrate.

This sequence belongs to the uroporphyrinogen decarboxylase family. In terms of assembly, homodimer.

The protein localises to the cytoplasm. The catalysed reaction is uroporphyrinogen III + 4 H(+) = coproporphyrinogen III + 4 CO2. Its pathway is porphyrin-containing compound metabolism; protoporphyrin-IX biosynthesis; coproporphyrinogen-III from 5-aminolevulinate: step 4/4. Functionally, catalyzes the decarboxylation of four acetate groups of uroporphyrinogen-III to yield coproporphyrinogen-III. This is Uroporphyrinogen decarboxylase from Cereibacter sphaeroides (strain ATCC 17025 / ATH 2.4.3) (Rhodobacter sphaeroides).